The following is a 613-amino-acid chain: Oxidoreductase GME11365 (613 aa).

Plastocyanin-like domains are found at residues 72–188, 198–331, and 431–571; these read ISEA…HGPS, PLLI…WIHG, and VDWR…EQPS.

The protein belongs to the multicopper oxidase family.

Its pathway is secondary metabolite biosynthesis. Oxidoreductase; part of the gene cluster that mediates the biosynthesis of dibenzodioxocinones such as pestalotiollide B, a novel class of inhibitors against cholesterol ester transfer protein (CEPT). The biosynthesis initiates from condensation of acetate and malonate units catalyzed by the non-reducing PKS pks8/GME11356. Pks8/GME11356 lacks a thioesterase (TE) domain, which is important to the cyclizing of the third ring of atrochrysone carboxylic acid, and the esterase GME11355 might play the role of TE and catalyzes the cyclization reaction of the C ring. The lactamase-like protein GME11357 (or other beta-lactamases in Pestalotiopsis microspora) probably hydrolyzes the thioester bond between the ACP of pks8/GME11356 and the intermediate to release atrochrysone carboxylic acid, which is spontaneously dehydrates to form endocrocin anthrone. Endocrocin anthrone is further converted to emodin via the endocrocin intermediate. Emodin is then oxidized by several enzymes such as the Baeyer-Villiger oxidase GME11358, the oxidoreductase GME11367, the short chain dehydrogenase/reductase GME11373, as well as by other oxidoreductases from the cluster, to modify the A and C rings and open the B ring, and finally yield monodictyphenone. The prenyltransferase GME11375 may catalyze the addition reaction between the C5 side chains and the carbon bone of dibenzodioxocinones. The remaining biochemical reactions to the final product dibenzodioxocinones should be methylation catalyzed by methyltransferase GME11366 and reduction and lactonization reaction catalyzed by a series of oxidordeuctases. In Pestalotiopsis microspora, this protein is Oxidoreductase GME11365.